A 139-amino-acid polypeptide reads, in one-letter code: Large ribosomal subunit protein uL16 (139 aa).

This sequence belongs to the universal ribosomal protein uL16 family. Part of the 50S ribosomal subunit.

In terms of biological role, binds 23S rRNA and is also seen to make contacts with the A and possibly P site tRNAs. In Chlorobium luteolum (strain DSM 273 / BCRC 81028 / 2530) (Pelodictyon luteolum), this protein is Large ribosomal subunit protein uL16.